A 365-amino-acid chain; its full sequence is MAVMAPRTLVLLLSGALALTQTWAGSHSMRYFSTSVSRPGRGEPRFIAVGYVDDTQFVRFDSDAASQRMEPRAPWIEQEGPEYWDEETRSVKASAQTDRVDLGTLRGYYNQSEDGSHTIQLMFGCDVGSDGRFLRGYRQDAYDGKDYIALNEDLRSWTAADMAAQITQRKWEAAHAAEQLRAYLEGTCVEWLRRYLENGKETLQRTDPPKTHMTHHPISDREATLRCWALGFYPAEITLTWQRDGEDQTQDTELVETRPAGDGTFQKWAAVVVPSGEEQRYTCHVQHEGLPKPLTLRWEPSSQPTIPIVGIIAGLVLLGAVITGAVVAAVMWRRKSSDRKGGSYSQAASSDSAQGSDVSLTACKV.

Positions 1-24 (MAVMAPRTLVLLLSGALALTQTWA) are cleaved as a signal peptide. The interval 25–114 (GSHSMRYFST…LRGYYNQSED (90 aa)) is alpha-1. At 25-308 (GSHSMRYFST…EPSSQPTIPI (284 aa)) the chain is on the extracellular side. Asparagine 110 carries N-linked (GlcNAc...) asparagine glycosylation. An alpha-2 region spans residues 115 to 206 (GSHTIQLMFG…ENGKETLQRT (92 aa)). Disulfide bonds link cysteine 125–cysteine 188 and cysteine 227–cysteine 283. An alpha-3 region spans residues 207–298 (DPPKTHMTHH…GLPKPLTLRW (92 aa)). The Ig-like C1-type domain maps to 209–295 (PKTHMTHHPI…QHEGLPKPLT (87 aa)). Residues 299 to 308 (EPSSQPTIPI) form a connecting peptide region. A helical membrane pass occupies residues 309–332 (VGIIAGLVLLGAVITGAVVAAVMW). Over 333-365 (RRKSSDRKGGSYSQAASSDSAQGSDVSLTACKV) the chain is Cytoplasmic. The interval 338–365 (DRKGGSYSQAASSDSAQGSDVSLTACKV) is disordered. The span at 342-359 (GSYSQAASSDSAQGSDVS) shows a compositional bias: low complexity. Serine 343 carries the post-translational modification Phosphoserine. Residue tyrosine 344 is modified to Phosphotyrosine. Phosphoserine occurs at positions 345, 349, 352, 356, and 359.

This sequence belongs to the MHC class I family. In terms of assembly, heterodimer of an alpha chain and a beta chain (beta-2-microglobulin).

It localises to the membrane. Involved in the presentation of foreign antigens to the immune system. The sequence is that of Patr class I histocompatibility antigen, A-126 alpha chain (Patr-A) from Pan troglodytes (Chimpanzee).